The chain runs to 101 residues: Anti-lipopolysaccharide factor (101 aa).

A disulfide bond links C31 and C52.

In terms of biological role, binds tightly to LPS and thus specifically inhibits the LPS-mediated activation of the hemolymph coagulation. It has a strong antibacterial effect especially on the growth of Gram-negative bacteria. In Limulus polyphemus (Atlantic horseshoe crab), this protein is Anti-lipopolysaccharide factor.